A 1134-amino-acid chain; its full sequence is Isoleucine--tRNA ligase (1134 aa).

The short motif at 52 to 62 (PFANGLPHYGH) is the 'HIGH' region element. Residues 656-660 (KLSKR) carry the 'KMSKS' region motif. Lys659 contributes to the ATP binding site.

It belongs to the class-I aminoacyl-tRNA synthetase family. IleS type 2 subfamily. In terms of assembly, monomer. Zn(2+) serves as cofactor.

It localises to the cytoplasm. The catalysed reaction is tRNA(Ile) + L-isoleucine + ATP = L-isoleucyl-tRNA(Ile) + AMP + diphosphate. Its function is as follows. Catalyzes the attachment of isoleucine to tRNA(Ile). As IleRS can inadvertently accommodate and process structurally similar amino acids such as valine, to avoid such errors it has two additional distinct tRNA(Ile)-dependent editing activities. One activity is designated as 'pretransfer' editing and involves the hydrolysis of activated Val-AMP. The other activity is designated 'posttransfer' editing and involves deacylation of mischarged Val-tRNA(Ile). The protein is Isoleucine--tRNA ligase of Wolbachia sp. subsp. Brugia malayi (strain TRS).